A 400-amino-acid chain; its full sequence is Phosphoglycerate kinase (400 aa).

Substrate-binding positions include 21 to 23 (DLN), arginine 36, 59 to 62 (HLGR), arginine 114, and arginine 147. ATP contacts are provided by residues lysine 202, glutamate 329, and 355-358 (GGDT).

The protein belongs to the phosphoglycerate kinase family. Monomer.

The protein localises to the cytoplasm. It carries out the reaction (2R)-3-phosphoglycerate + ATP = (2R)-3-phospho-glyceroyl phosphate + ADP. It participates in carbohydrate degradation; glycolysis; pyruvate from D-glyceraldehyde 3-phosphate: step 2/5. In Psychrobacter cryohalolentis (strain ATCC BAA-1226 / DSM 17306 / VKM B-2378 / K5), this protein is Phosphoglycerate kinase.